Consider the following 359-residue polypeptide: Phosphoserine aminotransferase (359 aa).

Residues Ser-9 and Arg-42 each contribute to the L-glutamate site. Pyridoxal 5'-phosphate contacts are provided by residues 76–77, Trp-102, Thr-152, Asp-171, and Gln-194; that span reads AS. N6-(pyridoxal phosphate)lysine is present on Lys-195. 236-237 is a binding site for pyridoxal 5'-phosphate; it reads NT.

This sequence belongs to the class-V pyridoxal-phosphate-dependent aminotransferase family. SerC subfamily. Homodimer. Pyridoxal 5'-phosphate serves as cofactor.

It is found in the cytoplasm. It carries out the reaction O-phospho-L-serine + 2-oxoglutarate = 3-phosphooxypyruvate + L-glutamate. It catalyses the reaction 4-(phosphooxy)-L-threonine + 2-oxoglutarate = (R)-3-hydroxy-2-oxo-4-phosphooxybutanoate + L-glutamate. It functions in the pathway amino-acid biosynthesis; L-serine biosynthesis; L-serine from 3-phospho-D-glycerate: step 2/3. It participates in cofactor biosynthesis; pyridoxine 5'-phosphate biosynthesis; pyridoxine 5'-phosphate from D-erythrose 4-phosphate: step 3/5. Catalyzes the reversible conversion of 3-phosphohydroxypyruvate to phosphoserine and of 3-hydroxy-2-oxo-4-phosphonooxybutanoate to phosphohydroxythreonine. This Marinomonas sp. (strain MWYL1) protein is Phosphoserine aminotransferase.